Here is a 751-residue protein sequence, read N- to C-terminus: Catalase-peroxidase (751 aa).

Residues 1–21 (MSNESKCPFHQTAGGGTTNRD) form a disordered region. Residues 90 to 244 (WHSAGTYRIG…LAAVQMGLIY (155 aa)) constitute a cross-link (tryptophyl-tyrosyl-methioninium (Trp-Tyr) (with M-270)). The active-site Proton acceptor is His-91. The tract at residues 195 to 227 (YGKDQVKAQPPGQGDLVAEPAKHGEEQNRDLSA) is disordered. Positions 214 to 227 (PAKHGEEQNRDLSA) are enriched in basic and acidic residues. Positions 244–270 (YVNPEGPEGNPDPVASGKDIRETFGRM) form a cross-link, tryptophyl-tyrosyl-methioninium (Tyr-Met) (with W-90). His-285 serves as a coordination point for heme b. The segment at 364 to 385 (GAHQWRPKDGKGAGTVPDAHDP) is disordered.

Belongs to the peroxidase family. Peroxidase/catalase subfamily. As to quaternary structure, homodimer or homotetramer. It depends on heme b as a cofactor. Post-translationally, formation of the three residue Trp-Tyr-Met cross-link is important for the catalase, but not the peroxidase activity of the enzyme.

The catalysed reaction is H2O2 + AH2 = A + 2 H2O. The enzyme catalyses 2 H2O2 = O2 + 2 H2O. Functionally, bifunctional enzyme with both catalase and broad-spectrum peroxidase activity. This Pseudomonas putida (strain ATCC 47054 / DSM 6125 / CFBP 8728 / NCIMB 11950 / KT2440) protein is Catalase-peroxidase.